A 439-amino-acid chain; its full sequence is Adenylosuccinate synthetase (439 aa).

Residues 25–31 (GDEGKGK), 53–55 (GHT), and K62 contribute to the GTP site. The active-site Proton acceptor is D26. Positions 26 and 53 each coordinate Mg(2+). IMP contacts are provided by residues 26 to 29 (DEGK) and 51 to 54 (NAGH). H54 (proton donor) is an active-site residue. Residues T141, R155, N232, and T247 each coordinate IMP. T307 contacts GTP. 307–313 (TTTNRPR) provides a ligand contact to substrate. Position 311 (R311) interacts with IMP. GTP contacts are provided by residues R313, 339–341 (KLD), and 425–427 (GVG).

This sequence belongs to the adenylosuccinate synthetase family. As to quaternary structure, homodimer. Mg(2+) serves as cofactor.

It is found in the cytoplasm. It carries out the reaction IMP + L-aspartate + GTP = N(6)-(1,2-dicarboxyethyl)-AMP + GDP + phosphate + 2 H(+). The protein operates within purine metabolism; AMP biosynthesis via de novo pathway; AMP from IMP: step 1/2. Plays an important role in the salvage pathway for purine nucleotide biosynthesis. Catalyzes the first commited step in the biosynthesis of AMP from IMP. The polypeptide is Adenylosuccinate synthetase (Plasmodium chabaudi chabaudi).